We begin with the raw amino-acid sequence, 376 residues long: Lipid-A-disaccharide synthase (376 aa).

It belongs to the LpxB family.

It catalyses the reaction a lipid X + a UDP-2-N,3-O-bis[(3R)-3-hydroxyacyl]-alpha-D-glucosamine = a lipid A disaccharide + UDP + H(+). It functions in the pathway bacterial outer membrane biogenesis; LPS lipid A biosynthesis. Condensation of UDP-2,3-diacylglucosamine and 2,3-diacylglucosamine-1-phosphate to form lipid A disaccharide, a precursor of lipid A, a phosphorylated glycolipid that anchors the lipopolysaccharide to the outer membrane of the cell. This is Lipid-A-disaccharide synthase from Coxiella burnetii (strain Dugway 5J108-111).